A 130-amino-acid chain; its full sequence is T-cell receptor alpha chain V region PHDS58 (130 aa).

The signal sequence occupies residues 1–20 (MLLALLPVLGIHFVLRDAQA). The tract at residues 21–114 (QSVTQPDARV…SAVYFCAVSG (94 aa)) is v segment. N-linked (GlcNAc...) asparagine glycosylation is present at N90. The j segment stretch occupies residues 115–130 (FASALTFGSGTKVIVL).

The sequence is that of T-cell receptor alpha chain V region PHDS58 from Mus musculus (Mouse).